The primary structure comprises 127 residues: Large ribosomal subunit protein bL17 (127 aa).

It belongs to the bacterial ribosomal protein bL17 family. As to quaternary structure, part of the 50S ribosomal subunit. Contacts protein L32.

The chain is Large ribosomal subunit protein bL17 from Enterococcus faecalis (strain ATCC 700802 / V583).